The sequence spans 118 residues: D-dopachrome decarboxylase (118 aa).

An N-acetylproline modification is found at Pro-2. Residue Lys-33 is modified to N6-acetyllysine.

The protein belongs to the MIF family. In terms of assembly, homotrimer. In terms of tissue distribution, highly expressed in the liver and at lower levels in the heart, lung and pancreas.

It is found in the cytoplasm. The catalysed reaction is D-dopachrome + H(+) = 5,6-dihydroxyindole + CO2. Its function is as follows. Tautomerization of D-dopachrome with decarboxylation to give 5,6-dihydroxyindole (DHI). The polypeptide is D-dopachrome decarboxylase (DDT) (Homo sapiens (Human)).